A 302-amino-acid chain; its full sequence is MGLCKCPKRLVTNQFCFEHRVNVCEHCMVQSHPKCIVQSYLQWLRDSDYISNCNLCGTSLEQGECVRLVCYHVFHWDCLNARQAALPANTAPRGHQCPGCSVEIFPNTNLVSPVADALKNYLAQVNWGRNGLGLALLSEDQSSSLKAIKSKASVSQAAVSNMTKVHHIHSGGERERGKPNGGDASTPHSVLLMDAFNPPSSGDFNASSRRPLLPRQSPIGGTDRDDNKYQRRTPAALLSRWTRRFYSPSSRPPWRRTWFLVLSGILAFVMFIYLLAWMGRSGSNDGLDESWNNPNPQPNHYE.

A B box-type; degenerate zinc finger spans residues 1 to 43 (MGLCKCPKRLVTNQFCFEHRVNVCEHCMVQSHPKCIVQSYLQW). Residues 53–101 (CNLCGTSLEQGECVRLVCYHVFHWDCLNARQAALPANTAPRGHQCPGCS) form an RING-type; atypical zinc finger. The interval 168 to 233 (IHSGGERERG…RDDNKYQRRT (66 aa)) is disordered. Over residues 198–208 (PPSSGDFNASS) the composition is skewed to polar residues. Position 217 is a phosphoserine (S217). The chain crosses the membrane as a helical span at residues 258 to 278 (WFLVLSGILAFVMFIYLLAWM).

Belongs to the ZFPL1 family.

It localises to the membrane. This chain is Zinc finger protein-like 1 homolog, found in Drosophila pseudoobscura pseudoobscura (Fruit fly).